Here is a 706-residue protein sequence, read N- to C-terminus: Phenylalanine--tRNA ligase beta subunit, chloroplastic (706 aa).

Residues 300–388 form the B5 domain; the sequence is KVLKPIVLNY…RLHGFNNFLT (89 aa). Residues Asp366, Asp372, Glu375, and Glu376 each contribute to the Mg(2+) site. The FDX-ACB domain maps to 612 to 705; the sequence is SVYPKIVKDL…LELKVQAILR (94 aa).

It belongs to the phenylalanyl-tRNA synthetase beta subunit family. Type 1 subfamily. Tetramer of two alpha and two beta subunits. Mg(2+) serves as cofactor.

It localises to the plastid. Its subcellular location is the chloroplast. It carries out the reaction tRNA(Phe) + L-phenylalanine + ATP = L-phenylalanyl-tRNA(Phe) + AMP + diphosphate + H(+). In Phaeodactylum tricornutum (strain CCAP 1055/1), this protein is Phenylalanine--tRNA ligase beta subunit, chloroplastic.